The chain runs to 571 residues: Phosphomethylpyrimidine synthase (571 aa).

Residues Asn-201, Met-230, Tyr-259, His-295, 315–317 (SRG), 356–359 (DALR), and Glu-395 contribute to the substrate site. His-399 serves as a coordination point for Zn(2+). Tyr-422 serves as a coordination point for substrate. His-463 contributes to the Zn(2+) binding site. Residues Cys-545, Cys-548, and Cys-553 each coordinate [4Fe-4S] cluster.

It belongs to the ThiC family. It depends on [4Fe-4S] cluster as a cofactor.

The enzyme catalyses 5-amino-1-(5-phospho-beta-D-ribosyl)imidazole + S-adenosyl-L-methionine = 4-amino-2-methyl-5-(phosphooxymethyl)pyrimidine + CO + 5'-deoxyadenosine + formate + L-methionine + 3 H(+). It functions in the pathway cofactor biosynthesis; thiamine diphosphate biosynthesis. Catalyzes the synthesis of the hydroxymethylpyrimidine phosphate (HMP-P) moiety of thiamine from aminoimidazole ribotide (AIR) in a radical S-adenosyl-L-methionine (SAM)-dependent reaction. In Chlorobium phaeovibrioides (strain DSM 265 / 1930) (Prosthecochloris vibrioformis (strain DSM 265)), this protein is Phosphomethylpyrimidine synthase.